A 209-amino-acid polypeptide reads, in one-letter code: Vacuolar protein sorting-associated protein 28 homolog 1 (209 aa).

In terms of domain architecture, VPS28 N-terminal spans 1-99 (MEVKLWNDKR…TSGVPATVEH (99 aa)). Residues 109–205 (SSASVVAECV…SYNSFMAALP (97 aa)) form the VPS28 C-terminal domain.

The protein belongs to the VPS28 family. As to quaternary structure, component of the endosomal sorting required for transport complex I (ESCRT-I), composed of ELC, VPS28 and VPS37. Interacts with ELC.

It is found in the endosome. Its function is as follows. Component of the ESCRT-I complex (endosomal sorting complex required for transport I), a regulator of vesicular trafficking process. Required for the sorting of endocytic ubiquitinated cargos into multivesicular bodies (MVBs). Mediates the association to the ESCRT-0 complex. The polypeptide is Vacuolar protein sorting-associated protein 28 homolog 1 (VPS28-1) (Arabidopsis thaliana (Mouse-ear cress)).